We begin with the raw amino-acid sequence, 351 residues long: Calcium uniporter protein, mitochondrial (351 aa).

A mitochondrion-targeting transit peptide spans 1–50 (MAAAAGRSLLLLLSSRGGGGGGAGGCGALTAGCFPGLGVSRHRQQQHHRT). Residues 51–233 (VHQRIASWQN…ISRKAEKRTT (183 aa)) are Mitochondrial matrix-facing. 2 positions are modified to phosphoserine; by CaMK2: serine 57 and serine 92. Residues 75–165 (VTVVYQNGLP…LTYHVRPPKR (91 aa)) form an N-terminal MCU domain region. The residue at position 97 (cysteine 97) is an S-glutathionyl cysteine. Residues 192–223 (IEQHQLNKERELIERLEDLKEQLAPLEKVRIE) are a coiled coil. Residues 234–255 (LVLWGGLAYMATQFGILARLTW) traverse the membrane as a helical segment. Residues 256–262 (WEYSWDI) lie on the Mitochondrial intermembrane side of the membrane. The short motif at 260–268 (WDIMEPVTY) is the Selectivity filter element. Residues 263-284 (MEPVTYFITYGSAMAMYAYFVM) traverse the membrane as a helical segment. Residue glutamate 264 coordinates Ca(2+). The interval 285–290 (TRQEYV) is juxtamembrane helix. The Mitochondrial matrix portion of the chain corresponds to 285–351 (TRQEYVYPEA…LPLRQIGEKD (67 aa)). Residues 311–339 (RFDLEKYNQLKDAIAQAEMDLKRLRDPLQ) are a coiled coil. An N6-acetyllysine modification is found at lysine 332.

It belongs to the MCU (TC 1.A.77) family. As to quaternary structure, homotetramer. Component of the uniplex complex, composed of MCU, EMRE/SMDT1, MICU1 and MICU2 (or MICU3) in a 4:4:1:1 stoichiometry. Interacts with CCDC109B/MCUB; this inhibits channel activity. Interacts with MCUR1. Interactions with MICU1 and MCUR1 are mutually exclusive. Interacts with SLC25A23. In terms of processing, phosphorylation by CaMK2 in heart leads to increased MCU current. The regulation of MCU by CaMK2 is however subject to discussion: another group was unable to reproduce these results. Phosphorylated on tyrosines by PTK2B/PYK2, promoting oligomerization. Post-translationally, glutathionylation at Cys-97 in response to reactive oxygen species (ROS) promotes MCU higher-order assembly, leading to constitutive activation of the MCU channel and mitochondrial calcium overload. Undergoes proteolytic degradation by SPG7.

The protein resides in the mitochondrion inner membrane. It catalyses the reaction Ca(2+)(in) = Ca(2+)(out). MCU channel activity is regulated by the heterodimer composed of MICU1 and either MICU2 or MICU3, which act as calcium-sensors. At low calcium levels, MICU1 occludes the pore of the MCU channel, preventing mitochondrial calcium uptake. At higher calcium levels, calcium-binding to MICU1 and MICU2 (or MICU3) induces a conformational change that weakens MCU-MICU1 interactions and moves the MICU1-MICU2 heterodimer away from the pore, allowing calcium permeation through the channel. MCU channel activity is gated by EMRE/SMDT1 via the juxtamembrane helix loop. Inhibited by ruthenium red or its derivative Ru360. In terms of biological role, channel-forming and calcium-conducting subunit of the mitochondrial inner membrane calcium uniporter complex (uniplex), which mediates calcium uptake into the mitochondrial matrix. MCU channel activity is regulated by the calcium-sensor subunits of the uniplex MICU1 and MICU2 (or MICU3). Mitochondrial calcium homeostasis plays key roles in cellular physiology and regulates ATP production, cytoplasmic calcium signals and activation of cell death pathways. Involved in buffering the amplitude of systolic calcium rises in cardiomyocytes. While dispensable for baseline homeostatic cardiac function, acts as a key regulator of short-term mitochondrial calcium loading underlying a 'fight-or-flight' response during acute stress: acts by mediating a rapid increase of mitochondrial calcium in pacemaker cells. Participates in mitochondrial permeability transition during ischemia-reperfusion injury. Mitochondrial calcium uptake in skeletal muscle cells is involved in muscle size in adults. Regulates synaptic vesicle endocytosis kinetics in central nerve terminal. Regulates glucose-dependent insulin secretion in pancreatic beta-cells by regulating mitochondrial calcium uptake. Involved in antigen processing and presentation. This chain is Calcium uniporter protein, mitochondrial, found in Homo sapiens (Human).